The sequence spans 504 residues: Maturase K (504 aa).

Belongs to the intron maturase 2 family. MatK subfamily.

It is found in the plastid. The protein localises to the chloroplast. Usually encoded in the trnK tRNA gene intron. Probably assists in splicing its own and other chloroplast group II introns. The sequence is that of Maturase K from Vigna unguiculata (Cowpea).